A 942-amino-acid polypeptide reads, in one-letter code: Protein translocase subunit SecA (942 aa).

ATP-binding positions include Q90, 108–112 (GEGKT), and D509.

This sequence belongs to the SecA family. As to quaternary structure, monomer and homodimer. Part of the essential Sec protein translocation apparatus which comprises SecA, SecYEG and auxiliary proteins SecDF. Other proteins may also be involved.

The protein resides in the cell inner membrane. It localises to the cellular thylakoid membrane. The protein localises to the cytoplasm. It catalyses the reaction ATP + H2O + cellular proteinSide 1 = ADP + phosphate + cellular proteinSide 2.. Functionally, part of the Sec protein translocase complex. Interacts with the SecYEG preprotein conducting channel. Has a central role in coupling the hydrolysis of ATP to the transfer of proteins into and across the cell membrane, serving as an ATP-driven molecular motor driving the stepwise translocation of polypeptide chains across the membrane. In terms of biological role, probably participates in protein translocation into and across both the cytoplasmic and thylakoid membranes in cyanobacterial cells. The protein is Protein translocase subunit SecA of Prochlorococcus marinus (strain NATL2A).